The following is a 128-amino-acid chain: 3-aminoacrylate deaminase RutC (128 aa).

Belongs to the RutC family. Homotrimer.

It carries out the reaction (Z)-3-aminoacrylate + H2O + H(+) = 3-oxopropanoate + NH4(+). Functionally, involved in pyrimidine catabolism. Catalyzes the deamination of 3-aminoacrylate to malonic semialdehyde, a reaction that can also occur spontaneously. RutC may facilitate the reaction and modulate the metabolic fitness, rather than catalyzing essential functions. The sequence is that of 3-aminoacrylate deaminase RutC from Escherichia coli O103:H2 (strain 12009 / EHEC).